Reading from the N-terminus, the 73-residue chain is Translation initiation factor IF-1 (73 aa).

An S1-like domain is found at 1–73 (MAKKDGAIEV…SRGRIVYRYK (73 aa)).

This sequence belongs to the IF-1 family. Component of the 30S ribosomal translation pre-initiation complex which assembles on the 30S ribosome in the order IF-2 and IF-3, IF-1 and N-formylmethionyl-tRNA(fMet); mRNA recruitment can occur at any time during PIC assembly.

It localises to the cytoplasm. Its function is as follows. One of the essential components for the initiation of protein synthesis. Stabilizes the binding of IF-2 and IF-3 on the 30S subunit to which N-formylmethionyl-tRNA(fMet) subsequently binds. Helps modulate mRNA selection, yielding the 30S pre-initiation complex (PIC). Upon addition of the 50S ribosomal subunit IF-1, IF-2 and IF-3 are released leaving the mature 70S translation initiation complex. This Mycobacterium avium (strain 104) protein is Translation initiation factor IF-1.